We begin with the raw amino-acid sequence, 324 residues long: Polyprenol dehydrogenase (324 aa).

Catalysis depends on Tyr206, which acts as the Proton acceptor. NAD(+) is bound by residues Tyr206, Lys210, and Thr243.

Belongs to the short-chain dehydrogenases/reductases (SDR) family.

The protein resides in the lipid droplet. It catalyses the reaction a di-trans,poly-cis-polyprenol + NAD(+) = a di-trans,poly-cis-polyprenal + NADH + H(+). The catalysed reaction is a di-trans,poly-cis-polyprenol + NADP(+) = a di-trans,poly-cis-polyprenal + NADPH + H(+). It carries out the reaction a di-trans,poly-cis-dolichol + NADP(+) = a di-trans,poly-cis-dolichal + NADPH + H(+). The enzyme catalyses a di-trans,poly-cis-dolichol + NAD(+) = a di-trans,poly-cis-dolichal + NADH + H(+). Its pathway is protein modification; protein glycosylation. Functionally, oxidoreductase that plays a key role in early steps of protein N-linked glycosylation by mediating two non-consecutive steps in dolichol biosynthesis. Acts both as a NAD(+)-dependent dehydrogenase and as a NADPH-dependent reductase during the conversion of polyprenol into dolichol. First catalyzes the NAD(+)-dependent dehydrogenation of polyprenol into polyprenal; polyprenal is then reduced into dolichal by srd5a3. It then catalyzes the NADPH-dependent reduction of dolichal into dolichol. The polypeptide is Polyprenol dehydrogenase (Danio rerio (Zebrafish)).